An 862-amino-acid polypeptide reads, in one-letter code: AP-1 complex subunit gamma-2 (862 aa).

11 HEAT repeats span residues 1-28 (MNPF…EERA), 29-65 (VVRK…LGYP), 101-136 (EVLM…CSAE), 137-173 (MARD…KVPD), 308-345 (GLRV…VDSQ), 346-382 (AVQR…ENNV), 384-417 (PLAK…KFAP), 418-454 (EKIW…NAPD), 458-496 (YTVR…NNAG), 507-545 (TESD…RFPS), and 560-599 (SFVL…ATFS). The GAE domain occupies 744–859 (AAYPSIVAFE…LEEGQINNFP (116 aa)).

It belongs to the adaptor complexes large subunit family. In terms of assembly, adaptor protein complex 1 (AP-1) is a heterotetramer composed of two large adaptins (gamma-type subunit and beta-type subunit), a medium adaptin (mu-type subunit) and a small adaptin (sigma-type subunit).

It is found in the golgi apparatus. Its subcellular location is the cytoplasmic vesicle. The protein localises to the clathrin-coated vesicle membrane. Subunit of clathrin-associated adaptor protein complex 1 that plays a role in protein sorting at the trans-Golgi network and early endosomes (TGN/EE). The AP complexes mediate both the recruitment of clathrin to membranes and the recognition of sorting signals within the cytosolic tails of transmembrane cargo molecules. In Arabidopsis thaliana (Mouse-ear cress), this protein is AP-1 complex subunit gamma-2.